A 485-amino-acid chain; its full sequence is D-alanine--D-alanyl carrier protein ligase (485 aa).

An ATP-binding site is contributed by 144 to 145 (TS). Residue D189 coordinates D-alanine. Position 284–289 (284–289 (NTYGPT)) interacts with ATP. Position 293 (V293) interacts with D-alanine. Residues D365 and K473 each contribute to the ATP site. K473 serves as a coordination point for D-alanine.

Belongs to the ATP-dependent AMP-binding enzyme family. DltA subfamily.

It is found in the cytoplasm. The enzyme catalyses holo-[D-alanyl-carrier protein] + D-alanine + ATP = D-alanyl-[D-alanyl-carrier protein] + AMP + diphosphate. It participates in cell wall biogenesis; lipoteichoic acid biosynthesis. Catalyzes the first step in the D-alanylation of lipoteichoic acid (LTA), the activation of D-alanine and its transfer onto the D-alanyl carrier protein (Dcp) DltC. In an ATP-dependent two-step reaction, forms a high energy D-alanyl-AMP intermediate, followed by transfer of the D-alanyl residue as a thiol ester to the phosphopantheinyl prosthetic group of the Dcp. D-alanylation of LTA plays an important role in modulating the properties of the cell wall in Gram-positive bacteria, influencing the net charge of the cell wall. This chain is D-alanine--D-alanyl carrier protein ligase, found in Staphylococcus epidermidis (strain ATCC 35984 / DSM 28319 / BCRC 17069 / CCUG 31568 / BM 3577 / RP62A).